The primary structure comprises 140 residues: Large ribosomal subunit protein uL24 (140 aa).

It belongs to the universal ribosomal protein uL24 family. Part of the 50S ribosomal subunit.

One of two assembly initiator proteins, it binds directly to the 5'-end of the 23S rRNA, where it nucleates assembly of the 50S subunit. In terms of biological role, located at the polypeptide exit tunnel on the outside of the subunit. In Nanoarchaeum equitans (strain Kin4-M), this protein is Large ribosomal subunit protein uL24.